Reading from the N-terminus, the 157-residue chain is MKGAKSKGAAKADAKLAVKSKGAEKPAKGRKGKAGKDPNKPKRAPSAFFVFMEEFRKEFKEKNPKNKSVAAVGKAAGDRWKSLSESDKAPYVAKANKLKLEYNKAIAAYNKGESTAAKKAPAKEEEEEDEEESDKSKSEVNDEDDEEGSEEDEDDDE.

3 disordered regions span residues 1–45 (MKGA…KRAP), 59–87 (FKEK…SESD), and 109–157 (YNKG…DDDE). 2 stretches are compositionally biased toward basic and acidic residues: residues 10–27 (AKAD…EKPA) and 76–87 (AGDRWKSLSESD). The segment at residues 41–110 (PKRAPSAFFV…EYNKAIAAYN (70 aa)) is a DNA-binding region (HMG box). 2 stretches are compositionally biased toward acidic residues: residues 124 to 133 (EEEEEDEEES) and 141 to 157 (NDED…DDDE). A Phosphoserine; by CK2 modification is found at serine 149.

Expressed in all tissues examined.

The protein localises to the nucleus. Recognizes an AAGG motif at the MNF1-binding site. The sequence is that of DNA-binding protein MNB1B (MNB1B) from Zea mays (Maize).